Reading from the N-terminus, the 143-residue chain is Large ribosomal subunit protein uL15 (143 aa).

Residues 20–52 (GRGIGSGKGKTAGRGHKGQHSRAGGYHKVGFEG) are disordered. Residues 30-39 (TAGRGHKGQH) show a composition bias toward basic residues.

This sequence belongs to the universal ribosomal protein uL15 family. Part of the 50S ribosomal subunit.

Functionally, binds to the 23S rRNA. The protein is Large ribosomal subunit protein uL15 of Coxiella burnetii (strain CbuK_Q154) (Coxiella burnetii (strain Q154)).